The primary structure comprises 302 residues: MASSSSPPAAMEVGESTNWTELPPELTSAILHRLGAIEILENAQKVCRSWRRVCKDPSMWRKIDMHNLGDLDDMDYNLEIMCRHAVDRSQGGLVDIGIWYFGTVDLLNYIAHRSSNLRSLRLIRCSQITDDGFVEAVVKLPLEELELSYCSFSVESLRVVGQCCLNMKTLKLNKHPQKENDDDALAIAETMPKLRHLQLCGNGLSDTGLNAILDNCSNLEHLDLRRCFNVNLVGDLQKRCFESVKVVRHPNDSIHDIDIGSSEDEDPYDFSDIDLMSGDDDFEGYYDFSGASDFSDYDQFDF.

One can recognise an F-box domain in the interval 16–63 (STNWTELPPELTSAILHRLGAIEILENAQKVCRSWRRVCKDPSMWRKI).

As to quaternary structure, part of a SCF (ASK-cullin-F-box) protein ligase complex. Interacts with CUL1 and SPK1B/ASK2.

Its subcellular location is the nucleus. It participates in protein modification; protein ubiquitination. Its function is as follows. Component of SCF(ASK-cullin-F-box) E3 ubiquitin ligase complexes, which may mediate the ubiquitination and subsequent proteasomal degradation of target proteins. The chain is F-box protein SKIP19 (SKIP19) from Arabidopsis thaliana (Mouse-ear cress).